Here is a 286-residue protein sequence, read N- to C-terminus: Bifunctional protein FolD (286 aa).

Residues 166–168 (GRS), serine 191, and isoleucine 232 contribute to the NADP(+) site.

It belongs to the tetrahydrofolate dehydrogenase/cyclohydrolase family. Homodimer.

It carries out the reaction (6R)-5,10-methylene-5,6,7,8-tetrahydrofolate + NADP(+) = (6R)-5,10-methenyltetrahydrofolate + NADPH. The enzyme catalyses (6R)-5,10-methenyltetrahydrofolate + H2O = (6R)-10-formyltetrahydrofolate + H(+). It participates in one-carbon metabolism; tetrahydrofolate interconversion. Its function is as follows. Catalyzes the oxidation of 5,10-methylenetetrahydrofolate to 5,10-methenyltetrahydrofolate and then the hydrolysis of 5,10-methenyltetrahydrofolate to 10-formyltetrahydrofolate. In Herpetosiphon aurantiacus (strain ATCC 23779 / DSM 785 / 114-95), this protein is Bifunctional protein FolD.